A 359-amino-acid polypeptide reads, in one-letter code: Type-1 angiotensin II receptor A (359 aa).

The Extracellular portion of the chain corresponds to 1–25; it reads MALNSSAEDGIKRIQDDCPKAGRHS. N4 is a glycosylation site (N-linked (GlcNAc...) asparagine). The angiotensin II site is built by Q15 and D17. 2 cysteine pairs are disulfide-bonded: C18/C274 and C101/C180. Residues 26–55 form a helical membrane-spanning segment; it reads YIFVMIPTLYSIIFVVGIFGNSLVVIVIYF. At 56–61 the chain is on the cytoplasmic side; it reads YMKLKT. The helical transmembrane segment at 62 to 89 threads the bilayer; the sequence is VASVFLLNLALADLCFLLTLPLWAVYTA. The Extracellular portion of the chain corresponds to 90 to 98; it reads MEYRWPFGN. A helical membrane pass occupies residues 99-125; it reads HLCKIASASVSFNLYASVFLLTCLSID. Topologically, residues 126–141 are cytoplasmic; sequence RYLAIVHPMKSRLRRT. A helical transmembrane segment spans residues 142-165; that stretch reads MLVAKVTCIIIWLMAGLASLPAVI. Topologically, residues 166–190 are extracellular; that stretch reads HRNVYFIENTNITVCAFHYESRNST. R167 is an angiotensin II binding site. The N-linked (GlcNAc...) asparagine glycan is linked to N176. 3 residues coordinate angiotensin II: F182, H183, and Y184. A glycan (N-linked (GlcNAc...) asparagine) is linked at N188. The chain crosses the membrane as a helical span at residues 191 to 216; sequence LPIGLGLTKNILGFLFPFLIILTSYT. K199 is a binding site for angiotensin II. Topologically, residues 217-239 are cytoplasmic; the sequence is LIWKALKKAYEIQKNKPRNDDIF. The helical transmembrane segment at 240 to 268 threads the bilayer; the sequence is RIIMAIVLFFFFSWVPHQIFTFLDVLIQL. Topologically, residues 269–278 are extracellular; sequence GVIHDCKISD. The helical transmembrane segment at 279-304 threads the bilayer; sequence IVDTAMPITICIAYFNNCLNPLFYGF. The Cytoplasmic portion of the chain corresponds to 305–359; the sequence is LGKKFKKYFLQLLKYIPPKAKSHSSLSTKMSTLSYRPSDNMSSSAKKPASCFEVE. The segment covering 337–349 has biased composition (polar residues); that stretch reads LSYRPSDNMSSSA. Residues 337 to 359 form a disordered region; sequence LSYRPSDNMSSSAKKPASCFEVE. Residue C355 is the site of S-palmitoyl cysteine attachment.

It belongs to the G-protein coupled receptor 1 family. As to quaternary structure, interacts with MAS1. Interacts with ARRB1. Interacts with FLNA (via filamin repeat 21); increases PKA-mediated phosphorylation of FLNA. C-terminal Ser or Thr residues may be phosphorylated. As to expression, is expressed in the liver, kidney, aorta, lung, uterus, ovary, spleen, heart, adrenal gland, and vascular smooth muscle cell.

The protein localises to the cell membrane. Receptor for angiotensin II, a vasoconstricting peptide, which acts as a key regulator of blood pressure and sodium retention by the kidney. The activated receptor in turn couples to G-alpha proteins G(q) (GNAQ, GNA11, GNA14 or GNA15) and thus activates phospholipase C and increases the cytosolic Ca(2+) concentrations, which in turn triggers cellular responses such as stimulation of protein kinase C. This is Type-1 angiotensin II receptor A (Agtr1) from Rattus norvegicus (Rat).